We begin with the raw amino-acid sequence, 391 residues long: Elongation factor Tu (391 aa).

The region spanning 10 to 201 (KPHVNIGTIG…AVDEYIPTPA (192 aa)) is the tr-type G domain. Positions 19 to 26 (GHVDHGKT) are G1. Residue 19–26 (GHVDHGKT) participates in GTP binding. Position 26 (Thr26) interacts with Mg(2+). Residues 55 to 59 (GITIS) form a G2 region. The tract at residues 76–79 (DCPG) is G3. GTP contacts are provided by residues 76–80 (DCPGH) and 131–134 (NKVD). Positions 131 to 134 (NKVD) are G4. Positions 169-171 (SAL) are G5.

It belongs to the TRAFAC class translation factor GTPase superfamily. Classic translation factor GTPase family. EF-Tu/EF-1A subfamily. As to quaternary structure, monomer.

It localises to the cytoplasm. The catalysed reaction is GTP + H2O = GDP + phosphate + H(+). GTP hydrolase that promotes the GTP-dependent binding of aminoacyl-tRNA to the A-site of ribosomes during protein biosynthesis. In Jannaschia sp. (strain CCS1), this protein is Elongation factor Tu.